We begin with the raw amino-acid sequence, 337 residues long: Putative F-box protein At4g09870 (337 aa).

An F-box domain is found at 1-46 (MSISELSQDLLEEILCRVPAISLKKLRSTCKLWNSLFIDKRVRNEL).

This is Putative F-box protein At4g09870 from Arabidopsis thaliana (Mouse-ear cress).